The chain runs to 343 residues: Protein RecA (343 aa).

66-73 (GPESSGKT) contributes to the ATP binding site.

It belongs to the RecA family.

It is found in the cytoplasm. Can catalyze the hydrolysis of ATP in the presence of single-stranded DNA, the ATP-dependent uptake of single-stranded DNA by duplex DNA, and the ATP-dependent hybridization of homologous single-stranded DNAs. It interacts with LexA causing its activation and leading to its autocatalytic cleavage. The protein is Protein RecA of Rickettsia africae (strain ESF-5).